Reading from the N-terminus, the 331-residue chain is Ribose-phosphate pyrophosphokinase (331 aa).

55–57 (DGE) provides a ligand contact to ATP. Positions 148 and 187 each coordinate Mg(2+). The active site involves lysine 211. Residues arginine 213, aspartate 237, and 241 to 245 (DTGGT) each bind D-ribose 5-phosphate.

Belongs to the ribose-phosphate pyrophosphokinase family. Class I subfamily. In terms of assembly, homohexamer. It depends on Mg(2+) as a cofactor.

It localises to the cytoplasm. It catalyses the reaction D-ribose 5-phosphate + ATP = 5-phospho-alpha-D-ribose 1-diphosphate + AMP + H(+). It participates in metabolic intermediate biosynthesis; 5-phospho-alpha-D-ribose 1-diphosphate biosynthesis; 5-phospho-alpha-D-ribose 1-diphosphate from D-ribose 5-phosphate (route I): step 1/1. Its function is as follows. Involved in the biosynthesis of the central metabolite phospho-alpha-D-ribosyl-1-pyrophosphate (PRPP) via the transfer of pyrophosphoryl group from ATP to 1-hydroxyl of ribose-5-phosphate (Rib-5-P). The sequence is that of Ribose-phosphate pyrophosphokinase from Parasynechococcus marenigrum (strain WH8102).